Consider the following 901-residue polypeptide: HTH-type transcriptional regulator MalT (901 aa).

Residue 39 to 46 (SPAGYGKT) participates in ATP binding. The HTH luxR-type domain occupies 829–894 (ELIRTSPLTQ…DAVQHAQQLL (66 aa)). The segment at residues 853–872 (NEQIAGELAVAATTIKTHIR) is a DNA-binding region (H-T-H motif).

It belongs to the MalT family. In terms of assembly, monomer in solution. Oligomerizes to an active state in the presence of the positive effectors ATP and maltotriose.

With respect to regulation, activated by ATP and maltotriose, which are both required for DNA binding. Positively regulates the transcription of the maltose regulon whose gene products are responsible for uptake and catabolism of malto-oligosaccharides. Specifically binds to the promoter region of its target genes, recognizing a short DNA motif called the MalT box. The chain is HTH-type transcriptional regulator MalT from Salmonella gallinarum (strain 287/91 / NCTC 13346).